Reading from the N-terminus, the 361-residue chain is MKGLILVGGYGTRLRPLTLSVPKPLVEFCNRPMILHQIEALAEAGVTDIVLAVNYRPEVMVDTLKKYEKEYGVNITFSVETEPLGTAGPLKLAEKILKKDNSPFFVLNSDVICEYPFKELAEFHKSHGGKGTIVATKVDEPSKYGVIVHDLGTPNLIDRFVEKPKEFVGNRINAGLYILNPEVIDLIEMKPTSIETETFPKLVNEKSLYTFDLEGFWMDVGQPKDFLAGTGLYLQSLSRRHPEKLSTGSNIVSNAIIDPTAKISPDAKIGPDVVIGPNCVIGSGVRIVRSVLLKNCVVKENSLIKDTIVGWDSTIGRWCRLEGCAVLGHDVAVKDEVYVNGAKVLPHKSISANVPSEAIIM.

It belongs to the transferase hexapeptide repeat family.

It localises to the cytoplasm. The catalysed reaction is alpha-D-mannose 1-phosphate + GTP + H(+) = GDP-alpha-D-mannose + diphosphate. It functions in the pathway nucleotide-sugar biosynthesis; GDP-alpha-D-mannose biosynthesis; GDP-alpha-D-mannose from alpha-D-mannose 1-phosphate (GTP route): step 1/1. Its function is as follows. Involved in cell wall synthesis where it is required for glycosylation. Involved in cell cycle progression through cell-size checkpoint. The chain is Mannose-1-phosphate guanyltransferase 2 (MPG1) from Candida glabrata (strain ATCC 2001 / BCRC 20586 / JCM 3761 / NBRC 0622 / NRRL Y-65 / CBS 138) (Yeast).